The chain runs to 359 residues: Histidinol-phosphate aminotransferase (359 aa).

An N6-(pyridoxal phosphate)lysine modification is found at Lys-212.

Belongs to the class-II pyridoxal-phosphate-dependent aminotransferase family. Histidinol-phosphate aminotransferase subfamily. Homodimer. It depends on pyridoxal 5'-phosphate as a cofactor.

It catalyses the reaction L-histidinol phosphate + 2-oxoglutarate = 3-(imidazol-4-yl)-2-oxopropyl phosphate + L-glutamate. It participates in amino-acid biosynthesis; L-histidine biosynthesis; L-histidine from 5-phospho-alpha-D-ribose 1-diphosphate: step 7/9. This Buchnera aphidicola subsp. Melaphis rhois protein is Histidinol-phosphate aminotransferase.